A 300-amino-acid polypeptide reads, in one-letter code: Bifunctional protein FolD (300 aa).

NADP(+) contacts are provided by residues glycine 168 to serine 170, serine 193, and isoleucine 234.

This sequence belongs to the tetrahydrofolate dehydrogenase/cyclohydrolase family. Homodimer.

The catalysed reaction is (6R)-5,10-methylene-5,6,7,8-tetrahydrofolate + NADP(+) = (6R)-5,10-methenyltetrahydrofolate + NADPH. The enzyme catalyses (6R)-5,10-methenyltetrahydrofolate + H2O = (6R)-10-formyltetrahydrofolate + H(+). It functions in the pathway one-carbon metabolism; tetrahydrofolate interconversion. Catalyzes the oxidation of 5,10-methylenetetrahydrofolate to 5,10-methenyltetrahydrofolate and then the hydrolysis of 5,10-methenyltetrahydrofolate to 10-formyltetrahydrofolate. This chain is Bifunctional protein FolD, found in Ehrlichia canis (strain Jake).